The chain runs to 170 residues: Ribosome maturation factor RimM (170 aa).

The 74-residue stretch at Glu95–Met168 folds into the PRC barrel domain.

It belongs to the RimM family. In terms of assembly, binds ribosomal protein uS19.

It localises to the cytoplasm. In terms of biological role, an accessory protein needed during the final step in the assembly of 30S ribosomal subunit, possibly for assembly of the head region. Essential for efficient processing of 16S rRNA. May be needed both before and after RbfA during the maturation of 16S rRNA. It has affinity for free ribosomal 30S subunits but not for 70S ribosomes. The chain is Ribosome maturation factor RimM from Oceanobacillus iheyensis (strain DSM 14371 / CIP 107618 / JCM 11309 / KCTC 3954 / HTE831).